Here is a 227-residue protein sequence, read N- to C-terminus: MKINFLTLFPNYFSPFTEESIIAKAIENKLIDINIVDFRLFSLDKHHKVDDETYGGGQGMLLQIEPIDRALDSLESRGGYKILVSPQGKVFNQQKARELSKFDQITFISGRYEGFDERVTELVDEELSIGDYVLTGGELPSMVMADSIIRLIDNVIRKESHEYESFEGDGLLDYPQYTRPREYKGMSVPDVLLNGNHAEIEKWRKEAKYKKTLKNRPDIIERINHEK.

S-adenosyl-L-methionine-binding positions include glycine 110 and 129 to 134 (IGDYVL).

It belongs to the RNA methyltransferase TrmD family. Homodimer.

It is found in the cytoplasm. The catalysed reaction is guanosine(37) in tRNA + S-adenosyl-L-methionine = N(1)-methylguanosine(37) in tRNA + S-adenosyl-L-homocysteine + H(+). Functionally, specifically methylates guanosine-37 in various tRNAs. The protein is tRNA (guanine-N(1)-)-methyltransferase of Mycoplasmopsis agalactiae (strain NCTC 10123 / CIP 59.7 / PG2) (Mycoplasma agalactiae).